We begin with the raw amino-acid sequence, 197 residues long: 7-methyl-GTP pyrophosphatase (197 aa).

Aspartate 79 functions as the Proton acceptor in the catalytic mechanism.

Belongs to the Maf family. YceF subfamily.

The protein resides in the cytoplasm. It carries out the reaction N(7)-methyl-GTP + H2O = N(7)-methyl-GMP + diphosphate + H(+). Nucleoside triphosphate pyrophosphatase that hydrolyzes 7-methyl-GTP (m(7)GTP). May have a dual role in cell division arrest and in preventing the incorporation of modified nucleotides into cellular nucleic acids. The protein is 7-methyl-GTP pyrophosphatase of Dictyostelium discoideum (Social amoeba).